A 99-amino-acid chain; its full sequence is Regulatory protein FanB (99 aa).

In terms of biological role, trans-acting protein involved in the regulation of the biogenesis of K99 fimbriae (FanC). This is Regulatory protein FanB (fanB) from Escherichia coli.